The following is a 1320-amino-acid chain: Mediator of RNA polymerase II transcription subunit 15 (1320 aa).

Residues 235 to 244 show a composition bias toward polar residues; the sequence is QQASLNQLTP. Disordered stretches follow at residues 235–283, 372–398, 540–688, 702–791, and 1233–1270; these read QQAS…KPQQ, KNMM…PQQA, QLQQ…QQQT, QTQQ…PTEQ, and DSSS…DSKK. Composition is skewed to low complexity over residues 245 to 283, 375 to 398, and 540 to 554; these read QQRA…KPQQ, MAQQ…PQQA, and QLQQ…HTQL. The segment covering 555-587 has biased composition (polar residues); sequence ADSFSQRQFTSPTLAKPSANVSTIAQQQTQPTA. 3 stretches are compositionally biased toward low complexity: residues 588–624, 634–688, and 702–780; these read LSQS…QQQQ, QQQT…QQQT, and QTQQ…PQQT.

It belongs to the Mediator complex subunit 15 family. As to quaternary structure, component of the Mediator complex.

Its subcellular location is the nucleus. Component of the Mediator complex, a coactivator involved in regulated gene transcription of nearly all RNA polymerase II-dependent genes. Mediator functions as a bridge to convey information from gene-specific regulatory proteins to the basal RNA polymerase II transcription machinery. Mediator is recruited to promoters by direct interactions with regulatory proteins and serves as a scaffold for the assembly of a functional preinitiation complex with RNA polymerase II and the general transcription factors. This is Mediator of RNA polymerase II transcription subunit 15 (GAL11) from Eremothecium gossypii (strain ATCC 10895 / CBS 109.51 / FGSC 9923 / NRRL Y-1056) (Yeast).